The chain runs to 346 residues: DnaJ protein ERDJ3B (346 aa).

The first 23 residues, 1–23, serve as a signal peptide directing secretion; that stretch reads MAIRWSELCIVLFALSYAICVLA. Positions 26-91 constitute a J domain; that stretch reads SYYDVLQVPK…EKREIYNKYG (66 aa). N-linked (GlcNAc...) asparagine glycosylation is present at Asn267.

As to quaternary structure, interacts with SDF2 and MED37A/BIP1. Post-translationally, N-glycosylated. In terms of tissue distribution, expressed in leaves, flower buds and flowers.

Its subcellular location is the endoplasmic reticulum lumen. In terms of biological role, regulates protein folding in the endoplasmic reticulum (ER) lumen. Forms a complex in the ER with SDF2 and MED37A/BIP1 which is required for the proper accumulation and function of the surface-exposed leucine-rich repeat receptor kinases EFR involved in pathogen-associated molecular pattern (PAMP) triggered immunity. This Arabidopsis thaliana (Mouse-ear cress) protein is DnaJ protein ERDJ3B (ERDJ3B).